The primary structure comprises 76 residues: Protein RALF-like 30 (76 aa).

Residues 1–22 form the signal peptide; that stretch reads MKAWVICLMVISIFMMIEPTLA. Disulfide bonds link C37/C46 and C66/C72.

It belongs to the plant rapid alkalinization factor (RALF) family.

The protein localises to the secreted. Functionally, cell signaling peptide that may regulate plant stress, growth, and development. Mediates a rapid alkalinization of extracellular space by mediating a transient increase in the cytoplasmic Ca(2+) concentration leading to a calcium-dependent signaling events through a cell surface receptor and a concomitant activation of some intracellular mitogen-activated protein kinases. This is Protein RALF-like 30 (RALFL30) from Arabidopsis thaliana (Mouse-ear cress).